Reading from the N-terminus, the 666-residue chain is Magnesium-chelatase 67 kDa subunit (666 aa).

37–44 (GRRGTGKT) is a binding site for ATP. Residues 327-367 (LPDEEEQMQPPPPPPPPPPPPEPDKPDDPETPPDEAPKDEQ) are disordered. Over residues 335–347 (QPPPPPPPPPPPP) the composition is skewed to pro residues. The VWFA domain occupies 475 to 661 (LIIFVVDASG…SLAETVKSGV (187 aa)).

It belongs to the Mg-chelatase subunits D/I family.

The catalysed reaction is protoporphyrin IX + Mg(2+) + ATP + H2O = Mg-protoporphyrin IX + ADP + phosphate + 3 H(+). It participates in porphyrin-containing compound metabolism; bacteriochlorophyll biosynthesis. Its function is as follows. Involved in bacteriochlorophyll biosynthesis; introduces a magnesium ion into protoporphyrin IX to yield Mg-protoporphyrin IX. This is Magnesium-chelatase 67 kDa subunit (bchD) from Heliobacterium mobile (Heliobacillus mobilis).